The primary structure comprises 139 residues: MADVDVDVPSAAPVLDGAMDINTALQEVLKKSLIADGLVHGIHQACKALDKRQAVLCILAESFDEPNYKKLVTALCNEHQIPLIRVDSHKKLGEWSGLCKIDKEGKPRKVCGCSVVVIKDFGEETPALDVVKDHLRQNS.

The protein belongs to the eukaryotic ribosomal protein eS12 family. Subunit of the 40S ribosomal complex. Part of the small subunit (SSU) processome, composed of more than 70 proteins and the RNA chaperone small nucleolar RNA (snoRNA) U3.

The protein localises to the nucleus. It localises to the nucleolus. In terms of biological role, subunit of the 40S ribosomal complex. Part of the small subunit (SSU) processome, first precursor of the small eukaryotic ribosomal subunit. During the assembly of the SSU processome in the nucleolus, many ribosome biogenesis factors, an RNA chaperone and ribosomal proteins associate with the nascent pre-rRNA and work in concert to generate RNA folding, modifications, rearrangements and cleavage as well as targeted degradation of pre-ribosomal RNA by the RNA exosome. In wing imaginal disks, might have a role in translation rate, growth and cell competition, probably through regulation of Xrp1 expression. Might have a role in development and longevity. This Drosophila melanogaster (Fruit fly) protein is Small ribosomal subunit protein eS12.